The primary structure comprises 391 residues: Succinyl-diaminopimelate desuccinylase (391 aa).

His-78 lines the Zn(2+) pocket. Asp-80 is an active-site residue. Asp-111 lines the Zn(2+) pocket. Glu-145 functions as the Proton acceptor in the catalytic mechanism. 3 residues coordinate Zn(2+): Glu-146, Glu-174, and His-360.

It belongs to the peptidase M20A family. DapE subfamily. As to quaternary structure, homodimer. The cofactor is Zn(2+). Co(2+) is required as a cofactor.

The enzyme catalyses N-succinyl-(2S,6S)-2,6-diaminopimelate + H2O = (2S,6S)-2,6-diaminopimelate + succinate. It participates in amino-acid biosynthesis; L-lysine biosynthesis via DAP pathway; LL-2,6-diaminopimelate from (S)-tetrahydrodipicolinate (succinylase route): step 3/3. Its function is as follows. Catalyzes the hydrolysis of N-succinyl-L,L-diaminopimelic acid (SDAP), forming succinate and LL-2,6-diaminopimelate (DAP), an intermediate involved in the bacterial biosynthesis of lysine and meso-diaminopimelic acid, an essential component of bacterial cell walls. The protein is Succinyl-diaminopimelate desuccinylase of Acidovorax ebreus (strain TPSY) (Diaphorobacter sp. (strain TPSY)).